The sequence spans 427 residues: Kallistatin (427 aa).

The signal sequence occupies residues 1-20; sequence MHLIDYLLLLLVGLLALSHG. 3 N-linked (GlcNAc...) asparagine glycosylation sites follow: N33, N108, and N157. N238 carries N-linked (GlcNAc...) (complex) asparagine glycosylation.

The protein belongs to the serpin family. In terms of assembly, monomer and some homodimers. Post-translationally, the N-terminus is blocked. Expressed by the liver and secreted in plasma.

The protein localises to the secreted. Inhibits human amidolytic and kininogenase activities of tissue kallikrein. Inhibition is achieved by formation of an equimolar, heat- and SDS-stable complex between the inhibitor and the enzyme, and generation of a small C-terminal fragment of the inhibitor due to cleavage at the reactive site by tissue kallikrein. This is Kallistatin (SERPINA4) from Homo sapiens (Human).